Here is a 658-residue protein sequence, read N- to C-terminus: CXXC-type zinc finger protein 1 (658 aa).

M1 carries the N-acetylmethionine modification. Acidic residues predominate over residues 1–14 (MEGDASDPEPPDAG). Residues 1–20 (MEGDASDPEPPDAGEDSKSE) are disordered. Phosphoserine is present on residues S6 and S19. The PHD-type zinc-finger motif lies at 28 to 76 (YCICRKPDINCFMIGCDNCNEWFHGDCIRITEKMAKAIREWYCRECREK). The tract at residues 84–164 (YRHKKSRERD…HQQQQQQQQI (81 aa)) is disordered. Residues 90 to 120 (RERDSSERDGSEPRDEGGGRKRPAPDPDLQR) show a composition bias toward basic and acidic residues. Residues 153 to 163 (QHHQQQQQQQQ) are compositionally biased toward low complexity. Residues 162–211 (QQIKRSARMCGECEACRRTEDCGHCDFCRDMKKFGGPNKIRQKCRLRQCQ) form a CXXC-type zinc finger. Zn(2+)-binding residues include C171, C174, C177, C183, C186, C189, C205, and C210. Disordered stretches follow at residues 221 to 285 (FPSS…SDED) and 327 to 373 (VKVK…DPAS). Position 226 is a phosphoserine (S226). A Phosphothreonine modification is found at T229. Residue K252 forms a Glycyl lysine isopeptide (Lys-Gly) (interchain with G-Cter in SUMO2) linkage. The span at 327–336 (VKVKHVKRRE) shows a compositional bias: basic residues. The span at 337–347 (KKSEKKKDERY) shows a compositional bias: basic and acidic residues. Basic residues predominate over residues 348–360 (KRHRQKQKHKDKW). Residues 361 to 370 (KHPERADAKD) show a composition bias toward basic and acidic residues. A coiled-coil region spans residues 428–470 (GKKLLERIRREQQSARTRLQEMERRFHELEAIILRAKQQAVRE).

As to quaternary structure, component of the SET1 complex, at least composed of the catalytic subunit (SETD1A or SETD1B), WDR5, WDR82, RBBP5, ASH2L/ASH2, CXXC1/CFP1, HCFC1 and DPY30. Interacts with SETD1A. Interacts with ZNF335. Interacts with PRDM9; this interaction does not link PRDM9-activated recombination hotspot sites with DSB machinery and is not required for the hotspot recognition pathway. Interacts with histone H3K4me3. Post-translationally, may be regulated by proteolysis.

Its subcellular location is the nucleus speckle. The protein resides in the nucleus. In terms of biological role, transcriptional activator that exhibits a unique DNA binding specificity for CpG unmethylated motifs with a preference for CpGG. The protein is CXXC-type zinc finger protein 1 (CXXC1) of Bos taurus (Bovine).